Here is a 352-residue protein sequence, read N- to C-terminus: Nicotinate-nucleotide--dimethylbenzimidazole phosphoribosyltransferase (352 aa).

The active-site Proton acceptor is Glu318.

It belongs to the CobT family.

It carries out the reaction 5,6-dimethylbenzimidazole + nicotinate beta-D-ribonucleotide = alpha-ribazole 5'-phosphate + nicotinate + H(+). It functions in the pathway nucleoside biosynthesis; alpha-ribazole biosynthesis; alpha-ribazole from 5,6-dimethylbenzimidazole: step 1/2. Its function is as follows. Catalyzes the synthesis of alpha-ribazole-5'-phosphate from nicotinate mononucleotide (NAMN) and 5,6-dimethylbenzimidazole (DMB). The polypeptide is Nicotinate-nucleotide--dimethylbenzimidazole phosphoribosyltransferase (Dehalococcoides mccartyi (strain CBDB1)).